The following is a 205-amino-acid chain: Small ribosomal subunit protein uS4c (205 aa).

The interval 22–42 (TSKISKKTNTPGEHGQPQNKL) is disordered. Polar residues predominate over residues 28–42 (KTNTPGEHGQPQNKL). Positions 94–157 (MRLDNIVYRL…ASRDLVKKFV (64 aa)) constitute an S4 RNA-binding domain.

The protein belongs to the universal ribosomal protein uS4 family. As to quaternary structure, part of the 30S ribosomal subunit. Contacts protein S5. The interaction surface between S4 and S5 is involved in control of translational fidelity.

The protein resides in the plastid. Its subcellular location is the chloroplast. Functionally, one of the primary rRNA binding proteins, it binds directly to 16S rRNA where it nucleates assembly of the body of the 30S subunit. Its function is as follows. With S5 and S12 plays an important role in translational accuracy. This is Small ribosomal subunit protein uS4c (rps4) from Tupiella akineta (Green alga).